The primary structure comprises 338 residues: Taste receptor type 2 member 39 (338 aa).

The Extracellular segment spans residues 1–30; it reads MLGRCFPPDTKEKQQLRMTKLCDPAESELS. Residues 31-51 form a helical membrane-spanning segment; that stretch reads PFLITLILAVLLAEYLIGIIA. Residues 52-74 are Cytoplasmic-facing; that stretch reads NGFIMAIHAAEWVQNKAVSTSGR. Residues 75-95 form a helical membrane-spanning segment; that stretch reads ILVFLSVSRIALQSLMMLEIT. The Extracellular segment spans residues 96-116; the sequence is ISSTSLSFYSEDAVYYAFKIS. A helical transmembrane segment spans residues 117–137; it reads FIFLNFCSLWFAAWLSFFYFV. Residues 138 to 156 lie on the Cytoplasmic side of the membrane; sequence KIANFSYPLFLKLRWRITG. The helical transmembrane segment at 157-177 threads the bilayer; the sequence is LIPWLLWLSVFISFSHSMFCI. Residues 178 to 205 are Extracellular-facing; sequence NIXTVYCNNSFPIHSSNSTKKTYLSEIN. N-linked (GlcNAc...) asparagine glycosylation is found at asparagine 185 and asparagine 194. Residues 206-226 form a helical membrane-spanning segment; that stretch reads VVGLAFFFNLGIVTPLIMFIL. At 227-262 the chain is on the cytoplasmic side; the sequence is TATLLILSLKRHTLHMGSNATGSNDPSMEAHMGAIK. A helical membrane pass occupies residues 263 to 283; it reads ATSYFLILYIFNAVALFIYLS. Residues 284 to 291 are Extracellular-facing; it reads NMFDINSL. Residues 292-312 form a helical membrane-spanning segment; that stretch reads WNNLCQIIMAAYPASHSILLI. At 313 to 338 the chain is on the cytoplasmic side; the sequence is QDNPGLRRAWKRLQLRLHLYPKEWTL.

This sequence belongs to the G-protein coupled receptor T2R family.

It is found in the membrane. Its function is as follows. Receptor that may play a role in the perception of bitterness and is gustducin-linked. May play a role in sensing the chemical composition of the gastrointestinal content. The activity of this receptor may stimulate alpha gustducin, mediate PLC-beta-2 activation and lead to the gating of TRPM5. This Gorilla gorilla gorilla (Western lowland gorilla) protein is Taste receptor type 2 member 39 (TAS2R39).